The sequence spans 414 residues: Glutamyl-tRNA reductase (414 aa).

Residues 49–52 (TCNR), S108, 113–115 (EPQ), and Q119 contribute to the substrate site. The active-site Nucleophile is C50. 188 to 193 (GAGQTG) is an NADP(+) binding site.

This sequence belongs to the glutamyl-tRNA reductase family. In terms of assembly, homodimer.

It catalyses the reaction (S)-4-amino-5-oxopentanoate + tRNA(Glu) + NADP(+) = L-glutamyl-tRNA(Glu) + NADPH + H(+). Its pathway is porphyrin-containing compound metabolism; protoporphyrin-IX biosynthesis; 5-aminolevulinate from L-glutamyl-tRNA(Glu): step 1/2. Its function is as follows. Catalyzes the NADPH-dependent reduction of glutamyl-tRNA(Glu) to glutamate 1-semialdehyde (GSA). The polypeptide is Glutamyl-tRNA reductase (Francisella tularensis subsp. holarctica (strain FTNF002-00 / FTA)).